Here is a 334-residue protein sequence, read N- to C-terminus: Holliday junction branch migration complex subunit RuvB (334 aa).

Residues 4–184 (ADRIISASPK…FGIVQRLEFY (181 aa)) are large ATPase domain (RuvB-L). ATP is bound by residues isoleucine 23, arginine 24, glycine 65, lysine 68, threonine 69, threonine 70, 131-133 (EDY), arginine 174, tyrosine 184, and arginine 221. Mg(2+) is bound at residue threonine 69. The tract at residues 185 to 255 (SVDDLTSIVK…IAKQALAMLD (71 aa)) is small ATPAse domain (RuvB-S). Positions 258–334 (SEGFDFMDIK…YAHLGIAKLD (77 aa)) are head domain (RuvB-H). DNA is bound by residues arginine 294, arginine 313, and arginine 318.

The protein belongs to the RuvB family. In terms of assembly, homohexamer. Forms an RuvA(8)-RuvB(12)-Holliday junction (HJ) complex. HJ DNA is sandwiched between 2 RuvA tetramers; dsDNA enters through RuvA and exits via RuvB. An RuvB hexamer assembles on each DNA strand where it exits the tetramer. Each RuvB hexamer is contacted by two RuvA subunits (via domain III) on 2 adjacent RuvB subunits; this complex drives branch migration. In the full resolvosome a probable DNA-RuvA(4)-RuvB(12)-RuvC(2) complex forms which resolves the HJ.

It localises to the cytoplasm. It carries out the reaction ATP + H2O = ADP + phosphate + H(+). Its function is as follows. The RuvA-RuvB-RuvC complex processes Holliday junction (HJ) DNA during genetic recombination and DNA repair, while the RuvA-RuvB complex plays an important role in the rescue of blocked DNA replication forks via replication fork reversal (RFR). RuvA specifically binds to HJ cruciform DNA, conferring on it an open structure. The RuvB hexamer acts as an ATP-dependent pump, pulling dsDNA into and through the RuvAB complex. RuvB forms 2 homohexamers on either side of HJ DNA bound by 1 or 2 RuvA tetramers; 4 subunits per hexamer contact DNA at a time. Coordinated motions by a converter formed by DNA-disengaged RuvB subunits stimulates ATP hydrolysis and nucleotide exchange. Immobilization of the converter enables RuvB to convert the ATP-contained energy into a lever motion, pulling 2 nucleotides of DNA out of the RuvA tetramer per ATP hydrolyzed, thus driving DNA branch migration. The RuvB motors rotate together with the DNA substrate, which together with the progressing nucleotide cycle form the mechanistic basis for DNA recombination by continuous HJ branch migration. Branch migration allows RuvC to scan DNA until it finds its consensus sequence, where it cleaves and resolves cruciform DNA. This Actinobacillus pleuropneumoniae serotype 5b (strain L20) protein is Holliday junction branch migration complex subunit RuvB.